Reading from the N-terminus, the 235-residue chain is Glucosamine-6-phosphate deaminase (235 aa).

Residue aspartate 62 is the Proton acceptor; for enolization step of the active site. The active-site For ring-opening step is asparagine 128. Histidine 130 serves as the catalytic Proton acceptor; for ring-opening step. Glutamate 135 functions as the For ring-opening step in the catalytic mechanism.

It belongs to the glucosamine/galactosamine-6-phosphate isomerase family. NagB subfamily.

The enzyme catalyses alpha-D-glucosamine 6-phosphate + H2O = beta-D-fructose 6-phosphate + NH4(+). It participates in amino-sugar metabolism; N-acetylneuraminate degradation; D-fructose 6-phosphate from N-acetylneuraminate: step 5/5. Catalyzes the reversible isomerization-deamination of glucosamine 6-phosphate (GlcN6P) to form fructose 6-phosphate (Fru6P) and ammonium ion. This Streptococcus gordonii (strain Challis / ATCC 35105 / BCRC 15272 / CH1 / DL1 / V288) protein is Glucosamine-6-phosphate deaminase.